The following is a 119-amino-acid chain: Large ribosomal subunit protein bL20 (119 aa).

The protein belongs to the bacterial ribosomal protein bL20 family.

Binds directly to 23S ribosomal RNA and is necessary for the in vitro assembly process of the 50S ribosomal subunit. It is not involved in the protein synthesizing functions of that subunit. This chain is Large ribosomal subunit protein bL20, found in Bordetella avium (strain 197N).